We begin with the raw amino-acid sequence, 460 residues long: Ribosomal protein uS12 methylthiotransferase RimO (460 aa).

The 112-residue stretch at 17 to 128 (PAVAVLHLGC…IVQVIQRAER (112 aa)) folds into the MTTase N-terminal domain. The [4Fe-4S] cluster site is built by cysteine 26, cysteine 62, cysteine 91, cysteine 166, cysteine 170, and cysteine 173. One can recognise a Radical SAM core domain in the interval 152–381 (TTHAPVAYLR…MQLQQGIAFR (230 aa)). Residues 384–450 (REQVGQVVPV…PYDLFGQVVE (67 aa)) form the TRAM domain.

Belongs to the methylthiotransferase family. RimO subfamily. Requires [4Fe-4S] cluster as cofactor.

It localises to the cytoplasm. It carries out the reaction L-aspartate(89)-[ribosomal protein uS12]-hydrogen + (sulfur carrier)-SH + AH2 + 2 S-adenosyl-L-methionine = 3-methylsulfanyl-L-aspartate(89)-[ribosomal protein uS12]-hydrogen + (sulfur carrier)-H + 5'-deoxyadenosine + L-methionine + A + S-adenosyl-L-homocysteine + 2 H(+). Functionally, catalyzes the methylthiolation of an aspartic acid residue of ribosomal protein uS12. The sequence is that of Ribosomal protein uS12 methylthiotransferase RimO from Synechococcus sp. (strain JA-3-3Ab) (Cyanobacteria bacterium Yellowstone A-Prime).